The chain runs to 393 residues: Serine/threonine-protein phosphatase 2A activator 1 (393 aa).

The segment at 328–393 (EKEEESIEQA…TSFSRDRLRR (66 aa)) is disordered. Composition is skewed to polar residues over residues 335–356 (EQANAGSPGREQTSTRFPTSTS) and 365–386 (SGNNINYLLSHQNQSHRNQTSF). Residue S341 is modified to Phosphoserine.

Belongs to the PTPA-type PPIase family. In terms of assembly, interacts with the phosphatase PP2A-like catalytic subunits PPG1, PPH3 and SIT4. Forms a ternary complex with SIT4-TAP42.

The protein localises to the cytoplasm. It localises to the nucleus. It catalyses the reaction [protein]-peptidylproline (omega=180) = [protein]-peptidylproline (omega=0). In terms of biological role, PPIases accelerate the folding of proteins. It catalyzes the cis-trans isomerization of proline imidic peptide bonds in oligopeptides. Acts as a regulatory subunit for TAP42-associated PP2A-like phosphatases modulating their activity or substrate specificity, probably by inducing a conformational change in the catalytic subunit, a direct target of the PPIase. Can reactivate inactive phosphatase PP2A-phosphatase methylesterase complexes (PP2Ai) in presence of ATP and Mg(2+) by dissociating the inactive form from the complex. Involved in the regulation of cell cycle progression, mitotic spindle formation, bud morphogenesis and DNA repair. In Saccharomyces cerevisiae (strain ATCC 204508 / S288c) (Baker's yeast), this protein is Serine/threonine-protein phosphatase 2A activator 1 (RRD1).